A 103-amino-acid polypeptide reads, in one-letter code: Potassium voltage-gated channel subfamily E member 3 (103 aa).

N-linked (GlcNAc...) asparagine glycans are attached at residues Asn5, Asn22, and Asn41. The interval 32 to 53 (RPGPGLGPDNQTEERRASLPGR) is disordered. Residues 43 to 53 (TEERRASLPGR) show a composition bias toward basic and acidic residues. Residues 57–77 (SYMYILFVMFLFAVTVGSLIL) traverse the membrane as a helical segment. Residues 68-79 (FAVTVGSLILGY) are interaction with KCNQ1. Topologically, residues 78 to 103 (GYTRSRKVDKRSDPYHVYIKNRVSMI) are cytoplasmic.

It belongs to the potassium channel KCNE family. In terms of assembly, interacts with KCNB1. Interacts with KCNC2. Associates with KCNC4/Kv3.4. Interacts with KCNQ1; associates with a KCNQ1:KCNE3 stoichiometry of 4:4; produces a current with nearly instantaneous activation with a linear current-voltage relationship and alters membrane raft localization; affects KCNQ1 structure and gating properties. Expressed in hippocampal neurons (at protein level). Widely expressed with highest levels in kidney and moderate levels in small intestine.

It localises to the cell membrane. The protein resides in the cytoplasm. Its subcellular location is the perikaryon. The protein localises to the cell projection. It is found in the dendrite. It localises to the membrane raft. Ancillary protein that functions as a regulatory subunit of the voltage-gated potassium (Kv) channel complex composed of pore-forming and potassium-conducting alpha subunits and of regulatory beta subunits. KCNE3 beta subunit modulates the gating kinetics and enhances stability of the channel complex. Alters the gating of the delayed rectifier Kv channel containing KCNB1 alpha subunit. Associates with KCNC4/Kv3.4 alpha subunit to form the subthreshold Kv channel in skeletal muscle and to establish the resting membrane potential (RMP) in muscle cells. Association with KCNQ1/KCLQT1 alpha subunit may form the intestinal cAMP-stimulated potassium channel involved in chloride secretion that produces a current with nearly instantaneous activation with a linear current-voltage relationship. This Homo sapiens (Human) protein is Potassium voltage-gated channel subfamily E member 3.